A 392-amino-acid chain; its full sequence is Bone morphogenetic protein 15 (392 aa).

The signal sequence occupies residues 1-25 (MALLTILRILLWGVVLFMEQRVQMA). Residues 26-267 (KPGWPSTALL…ESSFLMRSVR (242 aa)) constitute a propeptide that is removed on maturation. 5 N-linked (GlcNAc...) asparagine glycosylation sites follow: asparagine 85, asparagine 213, asparagine 236, asparagine 349, and asparagine 373. 3 cysteine pairs are disulfide-bonded: cysteine 291–cysteine 357, cysteine 320–cysteine 389, and cysteine 324–cysteine 391.

The protein belongs to the TGF-beta family. As to quaternary structure, homodimer. But, in contrast to other members of this family, cannot be disulfide-linked. In terms of tissue distribution, ovary specific.

The protein localises to the secreted. May be involved in follicular development. Oocyte-specific growth/differentiation factor that stimulates folliculogenesis and granulosa cell (GC) growth. This Mus musculus (Mouse) protein is Bone morphogenetic protein 15 (Bmp15).